Reading from the N-terminus, the 509-residue chain is Photosystem II CP47 reaction center protein (509 aa).

6 consecutive transmembrane segments (helical) span residues 21–36, 101–115, 140–156, 203–218, 237–252, and 457–472; these read SVHI…WAGS, IVFS…IWHW, GIHL…FGAF, IAAG…FHLS, VLSS…AFVV, and SFAL…HGAR.

This sequence belongs to the PsbB/PsbC family. PsbB subfamily. PSII is composed of 1 copy each of membrane proteins PsbA, PsbB, PsbC, PsbD, PsbE, PsbF, PsbH, PsbI, PsbJ, PsbK, PsbL, PsbM, PsbT, PsbX, PsbY, PsbZ, Psb30/Ycf12, at least 3 peripheral proteins of the oxygen-evolving complex and a large number of cofactors. It forms dimeric complexes. The cofactor is Binds multiple chlorophylls. PSII binds additional chlorophylls, carotenoids and specific lipids..

It is found in the plastid. Its subcellular location is the chloroplast thylakoid membrane. In terms of biological role, one of the components of the core complex of photosystem II (PSII). It binds chlorophyll and helps catalyze the primary light-induced photochemical processes of PSII. PSII is a light-driven water:plastoquinone oxidoreductase, using light energy to abstract electrons from H(2)O, generating O(2) and a proton gradient subsequently used for ATP formation. The sequence is that of Photosystem II CP47 reaction center protein from Cicer arietinum (Chickpea).